Reading from the N-terminus, the 329-residue chain is Flotillin-like protein FloA (329 aa).

2 helical membrane-spanning segments follow: residues 5 to 25 and 27 to 47; these read IFLLVVIGLIFVFLSVILSFI and LGLWISALAAGVKIGIFTLVG.

Belongs to the flotillin-like FloA family. Homooligomerizes.

It is found in the cell membrane. The protein resides in the membrane raft. In terms of biological role, found in functional membrane microdomains (FMM) that may be equivalent to eukaryotic membrane rafts. FMMs are highly dynamic and increase in number as cells age. Flotillins are thought to be important factors in membrane fluidity. In Thermoanaerobacter sp. (strain X514), this protein is Flotillin-like protein FloA.